A 331-amino-acid polypeptide reads, in one-letter code: dTDP-glucose 4,6-dehydratase (331 aa).

NAD(+)-binding positions include 11–12 (FI), 33–36 (DALT), 57–58 (DI), 77–81 (FAAES), and Thr-96. Ser-81 contacts substrate. Thr-120 contacts substrate. Asp-121 acts as the Proton donor in catalysis. Catalysis depends on proton acceptor residues Glu-122 and Tyr-147. 147-151 (YSATK) provides a ligand contact to NAD(+). A substrate-binding site is contributed by Asn-176. Asn-177 contributes to the NAD(+) binding site. Substrate-binding positions include 186–191 (KFIPRQ), 202–204 (KLY), Arg-211, Asn-246, and 269–273 (DRVGH).

The protein belongs to the NAD(P)-dependent epimerase/dehydratase family. dTDP-glucose dehydratase subfamily. In terms of assembly, homodimer. It depends on NAD(+) as a cofactor.

The catalysed reaction is dTDP-alpha-D-glucose = dTDP-4-dehydro-6-deoxy-alpha-D-glucose + H2O. It functions in the pathway carbohydrate biosynthesis; dTDP-L-rhamnose biosynthesis. In terms of biological role, catalyzes the dehydration of dTDP-D-glucose to form dTDP-6-deoxy-D-xylo-4-hexulose via a three-step process involving oxidation, dehydration and reduction. Involved in the biosynthesis of the dTDP-L-rhamnose which is a component of the critical linker, D-N-acetylglucosamine-L-rhamnose disaccharide, which connects the galactan region of arabinogalactan to peptidoglycan via a phosphodiester linkage. The chain is dTDP-glucose 4,6-dehydratase (rmlB) from Mycobacterium tuberculosis (strain CDC 1551 / Oshkosh).